The sequence spans 404 residues: Cysteine desulfurase IscS (404 aa).

Residues 75-76, asparagine 155, glutamine 183, and 203-205 each bind pyridoxal 5'-phosphate; these read AT and SGH. Lysine 206 carries the N6-(pyridoxal phosphate)lysine modification. Pyridoxal 5'-phosphate is bound at residue threonine 243. Cysteine 328 serves as the catalytic Cysteine persulfide intermediate. Cysteine 328 provides a ligand contact to [2Fe-2S] cluster.

This sequence belongs to the class-V pyridoxal-phosphate-dependent aminotransferase family. NifS/IscS subfamily. As to quaternary structure, homodimer. Forms a heterotetramer with IscU, interacts with other sulfur acceptors. The cofactor is pyridoxal 5'-phosphate.

It is found in the cytoplasm. The catalysed reaction is (sulfur carrier)-H + L-cysteine = (sulfur carrier)-SH + L-alanine. Its pathway is cofactor biosynthesis; iron-sulfur cluster biosynthesis. In terms of biological role, master enzyme that delivers sulfur to a number of partners involved in Fe-S cluster assembly, tRNA modification or cofactor biosynthesis. Catalyzes the removal of elemental sulfur atoms from cysteine to produce alanine. Functions as a sulfur delivery protein for Fe-S cluster synthesis onto IscU, an Fe-S scaffold assembly protein, as well as other S acceptor proteins. This is Cysteine desulfurase IscS from Shewanella baltica (strain OS155 / ATCC BAA-1091).